A 130-amino-acid chain; its full sequence is Large ribosomal subunit protein uL14 (130 aa).

This sequence belongs to the universal ribosomal protein uL14 family. As to quaternary structure, part of the 50S ribosomal subunit. Forms a cluster with proteins L3 and L19. In the 70S ribosome, L14 and L19 interact and together make contacts with the 16S rRNA in bridges B5 and B8.

Functionally, binds to 23S rRNA. Forms part of two intersubunit bridges in the 70S ribosome. The sequence is that of Large ribosomal subunit protein uL14 from Helicobacter pylori (strain P12).